Reading from the N-terminus, the 130-residue chain is Protein YchQ (130 aa).

The Periplasmic segment spans residues 1 to 9; it reads MTSFSTLLS. The helical transmembrane segment at 10–28 threads the bilayer; sequence VHLISIALSVGLLTLRFWL. The Cytoplasmic segment spans residues 29-39; the sequence is RYQKHPQAFAR. A helical membrane pass occupies residues 40-59; it reads WTRIVPPVVDTLLLLSGIAL. Over 60–73 the chain is Periplasmic; that stretch reads MAKAHILPFSGQAQ. A helical membrane pass occupies residues 74–93; it reads WLTEKLFGVIIYIVLGFIAL. The Cytoplasmic segment spans residues 94 to 104; the sequence is DYRRMHSQQAR. A helical transmembrane segment spans residues 105–124; sequence IIAFPLALVVLYIIIKLATT. Residues 125 to 130 lie on the Periplasmic side of the membrane; that stretch reads KVPLLG.

The protein belongs to the SirB2 family.

It localises to the cell inner membrane. The polypeptide is Protein YchQ (ychQ) (Escherichia coli (strain K12)).